A 238-amino-acid chain; its full sequence is RNA-free ribonuclease P (238 aa).

This sequence belongs to the HARP family.

The catalysed reaction is Endonucleolytic cleavage of RNA, removing 5'-extranucleotides from tRNA precursor.. RNA-free RNase P that catalyzes the removal of the 5'-leader sequence from pre-tRNA to produce the mature 5'-terminus. This is RNA-free ribonuclease P from Hyperthermus butylicus (strain DSM 5456 / JCM 9403 / PLM1-5).